A 285-amino-acid polypeptide reads, in one-letter code: Inositol oxygenase (285 aa).

Residue R29 participates in substrate binding. S33 bears the Phosphoserine mark. Residue 85 to 87 (DES) participates in substrate binding. Fe cation-binding residues include H98, H123, and D124. Substrate is bound by residues K127 and 141 to 142 (GD). Fe cation-binding residues include H194, H220, and D253. 220–221 (HS) contacts substrate.

Belongs to the myo-inositol oxygenase family. It depends on Fe cation as a cofactor. In terms of tissue distribution, kidney specific.

It localises to the cytoplasm. The enzyme catalyses myo-inositol + O2 = D-glucuronate + H2O + H(+). It functions in the pathway polyol metabolism; myo-inositol degradation into D-glucuronate; D-glucuronate from myo-inositol: step 1/1. This Rattus norvegicus (Rat) protein is Inositol oxygenase (Miox).